Reading from the N-terminus, the 382-residue chain is Anhydro-N-acetylmuramic acid kinase (382 aa).

ATP is bound at residue 15-22 (GTSLDGVD).

This sequence belongs to the anhydro-N-acetylmuramic acid kinase family.

It carries out the reaction 1,6-anhydro-N-acetyl-beta-muramate + ATP + H2O = N-acetyl-D-muramate 6-phosphate + ADP + H(+). It functions in the pathway amino-sugar metabolism; 1,6-anhydro-N-acetylmuramate degradation. The protein operates within cell wall biogenesis; peptidoglycan recycling. Catalyzes the specific phosphorylation of 1,6-anhydro-N-acetylmuramic acid (anhMurNAc) with the simultaneous cleavage of the 1,6-anhydro ring, generating MurNAc-6-P. Is required for the utilization of anhMurNAc either imported from the medium or derived from its own cell wall murein, and thus plays a role in cell wall recycling. The protein is Anhydro-N-acetylmuramic acid kinase of Haemophilus influenzae (strain ATCC 51907 / DSM 11121 / KW20 / Rd).